A 443-amino-acid polypeptide reads, in one-letter code: ATP-dependent protease ATPase subunit HslU (443 aa).

ATP-binding positions include I18, 60–65 (GVGKTE), D256, E321, and R393.

The protein belongs to the ClpX chaperone family. HslU subfamily. As to quaternary structure, a double ring-shaped homohexamer of HslV is capped on each side by a ring-shaped HslU homohexamer. The assembly of the HslU/HslV complex is dependent on binding of ATP.

It is found in the cytoplasm. Its function is as follows. ATPase subunit of a proteasome-like degradation complex; this subunit has chaperone activity. The binding of ATP and its subsequent hydrolysis by HslU are essential for unfolding of protein substrates subsequently hydrolyzed by HslV. HslU recognizes the N-terminal part of its protein substrates and unfolds these before they are guided to HslV for hydrolysis. The polypeptide is ATP-dependent protease ATPase subunit HslU (Escherichia coli O139:H28 (strain E24377A / ETEC)).